The sequence spans 287 residues: Co-chaperone protein DjlA (287 aa).

The Periplasmic portion of the chain corresponds to 1–6 (MQIFGK). The chain crosses the membrane as a helical span at residues 7-30 (ILGAFFGFLFGGVFGALFGLFIGH). At 31-287 (QFDKARRLSQ…DLIKKEKGFK (257 aa)) the chain is on the cytoplasmic side. The interval 192-213 (GGFGGQQHQSHHSSSHGGWQQA) is disordered. Residues 221–287 (DAYKILGIDA…DLIKKEKGFK (67 aa)) enclose the J domain.

As to quaternary structure, homodimer.

The protein localises to the cell inner membrane. Its function is as follows. Regulatory DnaK co-chaperone. Direct interaction between DnaK and DjlA is needed for the induction of the wcaABCDE operon, involved in the synthesis of a colanic acid polysaccharide capsule, possibly through activation of the RcsB/RcsC phosphotransfer signaling pathway. The colanic acid capsule may help the bacterium survive conditions outside the host. The protein is Co-chaperone protein DjlA of Vibrio vulnificus (strain YJ016).